Consider the following 96-residue polypeptide: Acetolactate synthase isozyme 1 small subunit (96 aa).

The ACT domain occupies 10 to 83 (ILELTVRNHP…DVVKVQRNQS (74 aa)).

It belongs to the acetolactate synthase small subunit family. As to quaternary structure, dimer of large and small chains.

It catalyses the reaction 2 pyruvate + H(+) = (2S)-2-acetolactate + CO2. Its pathway is amino-acid biosynthesis; L-isoleucine biosynthesis; L-isoleucine from 2-oxobutanoate: step 1/4. It functions in the pathway amino-acid biosynthesis; L-valine biosynthesis; L-valine from pyruvate: step 1/4. The polypeptide is Acetolactate synthase isozyme 1 small subunit (ilvN) (Escherichia coli O157:H7).